The primary structure comprises 405 residues: Multidrug resistance protein MdtH (405 aa).

The next 12 helical transmembrane spans lie at 13 to 33, 34 to 54, 78 to 95, 99 to 116, 139 to 159, 165 to 185, 213 to 233, 243 to 263, 277 to 297, 299 to 319, 340 to 360, and 365 to 385; these read YFLL…FPLI, SIRF…ALGL, MIIA…LMGI, PWLL…GTLF, LLMM…SWLL, LVCL…AWLL, YVLT…MLPI, AAVK…LYPI, LMAG…IEDL, ALFM…PARE, LGLA…YDVG, and IPQL…LGLY.

It belongs to the major facilitator superfamily. DHA1 family. MdtH (TC 2.A.1.2.21) subfamily.

Its subcellular location is the cell inner membrane. In Sodalis glossinidius (strain morsitans), this protein is Multidrug resistance protein MdtH.